We begin with the raw amino-acid sequence, 420 residues long: Glycerol-3-phosphate dehydrogenase [NAD(+)] 2, chloroplastic (420 aa).

Residues 1–45 (MAASVQPACLDLHFSGKHPPLLKHNAIIVRCVSSPNVIPEADSIS) constitute a chloroplast transit peptide. NAD(+)-binding positions include 94-99 (GGGSFG), phenylalanine 171, lysine 194, and alanine 228. Lysine 194 contacts substrate. Lysine 279 functions as the Proton acceptor in the catalytic mechanism. Positions 343 and 369 each coordinate NAD(+). 343-344 (RN) serves as a coordination point for substrate.

The protein belongs to the NAD-dependent glycerol-3-phosphate dehydrogenase family.

It localises to the plastid. The protein localises to the chloroplast. The catalysed reaction is sn-glycerol 3-phosphate + NAD(+) = dihydroxyacetone phosphate + NADH + H(+). It functions in the pathway membrane lipid metabolism; glycerophospholipid metabolism. In terms of biological role, required to supply glycerol-3-phosphate in the chloroplast for the synthesis of glycerolipids. Required for activation of systemic acquired resistance (SAR). Provision of glycerol-3-phosphate may be involved in generating lipid signals necessary for mediating defense responses and SAR. In Arabidopsis thaliana (Mouse-ear cress), this protein is Glycerol-3-phosphate dehydrogenase [NAD(+)] 2, chloroplastic (GLY1).